Here is a 101-residue protein sequence, read N- to C-terminus: Interleukin-8 (101 aa).

Positions 1–22 are cleaved as a signal peptide; that stretch reads MTSKLAVALLAAFLLSAALCEA. R27 bears the Citrulline mark. 2 disulfides stabilise this stretch: C34-C61 and C36-C77.

The protein belongs to the intercrine alpha (chemokine CxC) family. In terms of assembly, homodimer. Interacts with TNFAIP6 (via Link domain); this interaction interferes with chemokine binding to glycosaminoglycans. Post-translationally, citrullination at Arg-27 prevents proteolysis, and dampens tissue inflammation, it also enhances leukocytosis, possibly through impaired chemokine clearance from the blood circulation.

The protein localises to the secreted. Its function is as follows. Chemotactic factor that mediates inflammatory response by attracting neutrophils, basophils, and T-cells to clear pathogens and protect the host from infection. Also plays an important role in neutrophil activation. Released in response to an inflammatory stimulus, exerts its effect by binding to the G-protein-coupled receptors CXCR1 and CXCR2, primarily found in neutrophils, monocytes and endothelial cells. G-protein heterotrimer (alpha, beta, gamma subunits) constitutively binds to CXCR1/CXCR2 receptor and activation by IL8 leads to beta and gamma subunits release from Galpha (GNAI2 in neutrophils) and activation of several downstream signaling pathways including PI3K and MAPK pathways. This is Interleukin-8 (CXCL8) from Ovis aries (Sheep).